The chain runs to 1287 residues: FYVE zinc finger domain protein UPA1 (1287 aa).

A disordered region spans residues 1–298; it reads MTIPDPANII…SSTSLSAPAE (298 aa). The span at 86–99 shows a compositional bias: low complexity; the sequence is DSSSFGSKPSSSAS. Positions 115–136 are enriched in polar residues; the sequence is WATSSTTSHPSKASQSTLSPNA. Residues 128-144 carry the PAM2 motif; the sequence is SQSTLSPNASVFKPSRS. Composition is skewed to basic and acidic residues over residues 177–187 and 201–211; these read RPDHAPLDHEQ and KVEEQRGDHSI. Residues 212–235 are compositionally biased toward polar residues; the sequence is PHQNGLVSAQAQTASDAVSTSKYT. The PAM2L 1 motif lies at 239–253; it reads ADQEEDQDDFVYPGA. A compositionally biased stretch (polar residues) spans 255 to 294; the sequence is SPSSGQAAVQDEQQAVTDSQTTKSLTKQESDPEASSTSLS. 4 ANK repeats span residues 366-395, 400-429, 433-463, and 468-497; these read NGLVPLHFAAKDGKTDIVRWLITQAGAIVE, EGETALHKAAMAGKLSVASLLLSHGADANA, DGWTALHNACSRGYLDLVRLLVDRGHAQIDV, and GAWTPLMNAASKGHLPVVRHLTAKYHADPF. 4 disordered regions span residues 582 to 630, 643 to 697, 934 to 960, and 977 to 1005; these read NGGK…VGLP, RVGP…ASAQ, REAAGLDEDEDEDAADDDDDEFIYPNS, and TSGTLSRPSLSQRQSSAASMLRNSVAPSE. The segment covering 674-695 has biased composition (polar residues); it reads STPTPESVLQARRGTSSVNGAS. Residues 938-955 are compositionally biased toward acidic residues; the sequence is GLDEDEDEDAADDDDDEF. The PAM2L 2 signature appears at 941–960; the sequence is EDEDEDAADDDDDEFIYPNS. A compositionally biased stretch (low complexity) spans 981–995; it reads LSRPSLSQRQSSAAS. The FYVE-type zinc-finger motif lies at 1055-1129; sequence DEEAKDCIGC…VCNGCHAELQ (75 aa). Zn(2+) is bound by residues Cys-1061, Cys-1064, Cys-1077, Cys-1080, Cys-1085, Cys-1088, Cys-1121, and Cys-1124. Residues 1243 to 1283 form an RING-type; atypical zinc finger; it reads CSICMEDFVANSTIARLPCLCYFHRGCIDSWFKRGRECPVH.

This sequence belongs to the UPA1 PAM2 domain-binding protein family. Part of large ribonucleoprotein complexes (mRNPs) containing RNA-binding proteins RRM4 and PAB1, endosome-binding protein UPA1, core scaffold protein UPA2 and associated factor GRP1. Interacts (via PAM2 motif) with PAB1 (via PABC domain). Interacts (via PAM2L motifs) with RRM4.

It localises to the cytoplasm. The protein resides in the cytoskeleton. It is found in the endosome. In terms of biological role, FYVE zinc finger domain protein that functions in endosomal targeting and transport of mRNAs, as well as associated ribosomes. The endosomal mRNA transport regulates polarity of the infectious hyphae by transporting a broad spectrum of cargo mRNAs from the nucleus to cell poles. Involved in chitinase CTS1 secretion. Dispensable for general endosomal functions but crucial for endosomal recruitment of RRM4. The polypeptide is FYVE zinc finger domain protein UPA1 (Mycosarcoma maydis (Corn smut fungus)).